A 245-amino-acid chain; its full sequence is Tetraspanin-6 (245 aa).

Topologically, residues 1-19 (MASPSRRLQTKPVITCLKS) are cytoplasmic. A helical transmembrane segment spans residues 20 to 40 (VLLIYTFIFWITGVILLAVGI). The Extracellular segment spans residues 41–59 (WGKVSLENYFSLLNEKATN). A helical membrane pass occupies residues 60–80 (VPFVLIGTGTVIILLGTFGCF). Over 81–93 (ATCRTSAWMLKLY) the chain is Cytoplasmic. A helical membrane pass occupies residues 94–114 (AMFLTLIFLVELVAAIVGFVF). The Extracellular segment spans residues 115 to 208 (RHEIKNSFKS…IKVMTTIESE (94 aa)). A glycan (N-linked (GlcNAc...) asparagine) is linked at N134. A helical transmembrane segment spans residues 209-229 (MGVVAGISFGVACFQLIGIFL). The Cytoplasmic segment spans residues 230-245 (AYCLSRAITNNQYEIV).

Belongs to the tetraspanin (TM4SF) family.

Its subcellular location is the membrane. The sequence is that of Tetraspanin-6 (Tspan6) from Mus musculus (Mouse).